Consider the following 79-residue polypeptide: Putative membrane protein insertion efficiency factor (79 aa).

Belongs to the UPF0161 family.

The protein localises to the cell inner membrane. In terms of biological role, could be involved in insertion of integral membrane proteins into the membrane. This chain is Putative membrane protein insertion efficiency factor, found in Prochlorococcus marinus (strain SARG / CCMP1375 / SS120).